Consider the following 524-residue polypeptide: Peptide chain release factor 3 (524 aa).

The tr-type G domain maps to 11–278; the sequence is AKRRTFAIIS…SFVQYAPEPG (268 aa). GTP is bound by residues 20–27, 88–92, and 142–145; these read SHPDAGKT, DTPGH, and NKLD.

The protein belongs to the TRAFAC class translation factor GTPase superfamily. Classic translation factor GTPase family. PrfC subfamily.

Its subcellular location is the cytoplasm. Functionally, increases the formation of ribosomal termination complexes and stimulates activities of RF-1 and RF-2. It binds guanine nucleotides and has strong preference for UGA stop codons. It may interact directly with the ribosome. The stimulation of RF-1 and RF-2 is significantly reduced by GTP and GDP, but not by GMP. The sequence is that of Peptide chain release factor 3 from Lacticaseibacillus paracasei (strain ATCC 334 / BCRC 17002 / CCUG 31169 / CIP 107868 / KCTC 3260 / NRRL B-441) (Lactobacillus paracasei).